We begin with the raw amino-acid sequence, 205 residues long: Ephrin-A1 (205 aa).

The N-terminal stretch at 1–17 (MEFLWAPLLGLCCSLAA) is a signal peptide. The 144-residue stretch at 18-161 (ADRHIVFWNS…THNPQAHVNP (144 aa)) folds into the Ephrin RBD domain. Asparagine 26 carries N-linked (GlcNAc...) asparagine glycosylation. Disulfide bonds link cysteine 51–cysteine 92 and cysteine 80–cysteine 140. A lipid anchor (GPI-anchor amidated serine) is attached at serine 182. Residues 183 to 205 (AAPRLFPLVWAVLLLPLLLLQSQ) constitute a propeptide, removed in mature form.

The protein belongs to the ephrin family. As to quaternary structure, monomer. Homodimer. Forms heterodimers with EPHA2. Binds to the receptor tyrosine kinases EPHA2, EPHA3, EPHA4, EPHA5, EPHA6 and EPHA7. Also binds with low affinity to EPHA1. Undergoes proteolysis by a metalloprotease to give rise to a soluble monomeric form. In terms of processing, N-Glycosylation is required for binding to EPHA2 receptor and inducing its internalization. Expressed in myogenic progenitor cells.

It localises to the cell membrane. It is found in the secreted. Cell surface GPI-bound ligand for Eph receptors, a family of receptor tyrosine kinases which are crucial for migration, repulsion and adhesion during neuronal, vascular and epithelial development. Binds promiscuously Eph receptors residing on adjacent cells, leading to contact-dependent bidirectional signaling into neighboring cells. Plays an important role in angiogenesis and tumor neovascularization. The recruitment of VAV2, VAV3 and PI3-kinase p85 subunit by phosphorylated EPHA2 is critical for EFNA1-induced RAC1 GTPase activation and vascular endothelial cell migration and assembly. Exerts anti-oncogenic effects in tumor cells through activation and down-regulation of EPHA2. Activates EPHA2 by inducing tyrosine phosphorylation which leads to its internalization and degradation. Acts as a negative regulator in the tumorigenesis of gliomas by down-regulating EPHA2 and FAK. Can evoke collapse of embryonic neuronal growth cone and regulates dendritic spine morphogenesis. This is Ephrin-A1 (Efna1) from Mus musculus (Mouse).